The following is a 349-amino-acid chain: Biotin synthase (349 aa).

Positions 1-11 are enriched in basic and acidic residues; that stretch reads MLEGIEREAAE. Positions 1–30 are disordered; sequence MLEGIEREAAEHSNGCSGPAGHAPPAGAPR. The 220-residue stretch at 64–283 folds into the Radical SAM core domain; it reads HEVQLCTLLS…IAVARVMMPR (220 aa). [4Fe-4S] cluster-binding residues include Cys-79, Cys-83, and Cys-86. Positions 123, 155, 215, and 287 each coordinate [2Fe-2S] cluster.

It belongs to the radical SAM superfamily. Biotin synthase family. Homodimer. [4Fe-4S] cluster is required as a cofactor. Requires [2Fe-2S] cluster as cofactor.

It catalyses the reaction (4R,5S)-dethiobiotin + (sulfur carrier)-SH + 2 reduced [2Fe-2S]-[ferredoxin] + 2 S-adenosyl-L-methionine = (sulfur carrier)-H + biotin + 2 5'-deoxyadenosine + 2 L-methionine + 2 oxidized [2Fe-2S]-[ferredoxin]. Its pathway is cofactor biosynthesis; biotin biosynthesis; biotin from 7,8-diaminononanoate: step 2/2. Functionally, catalyzes the conversion of dethiobiotin (DTB) to biotin by the insertion of a sulfur atom into dethiobiotin via a radical-based mechanism. This Sorangium cellulosum (strain So ce56) (Polyangium cellulosum (strain So ce56)) protein is Biotin synthase.